The following is a 124-amino-acid chain: UPF0102 protein HEAR0176 (124 aa).

The protein belongs to the UPF0102 family.

This Herminiimonas arsenicoxydans protein is UPF0102 protein HEAR0176.